A 437-amino-acid polypeptide reads, in one-letter code: Trigger factor (437 aa).

In terms of domain architecture, PPIase FKBP-type spans 164-249 (GDRVTIDFAG…LKSVEAPKLP (86 aa)).

Belongs to the FKBP-type PPIase family. Tig subfamily.

The protein resides in the cytoplasm. The catalysed reaction is [protein]-peptidylproline (omega=180) = [protein]-peptidylproline (omega=0). Involved in protein export. Acts as a chaperone by maintaining the newly synthesized protein in an open conformation. Functions as a peptidyl-prolyl cis-trans isomerase. This is Trigger factor from Azoarcus sp. (strain BH72).